The sequence spans 283 residues: Polyamine aminopropyltransferase (283 aa).

The 236-residue stretch at 2–237 (ELWYTEEHTD…GHWLFGFASK (236 aa)) folds into the PABS domain. An S-methyl-5'-thioadenosine-binding site is contributed by Gln-31. Residues His-62 and Asp-86 each contribute to the spermidine site. S-methyl-5'-thioadenosine-binding positions include Glu-106 and 137-138 (DG). The active-site Proton acceptor is Asp-155. Spermidine is bound at residue 155-158 (DSTD). An S-methyl-5'-thioadenosine-binding site is contributed by Pro-162.

Belongs to the spermidine/spermine synthase family. In terms of assembly, homodimer or homotetramer.

The protein localises to the cytoplasm. The catalysed reaction is S-adenosyl 3-(methylsulfanyl)propylamine + putrescine = S-methyl-5'-thioadenosine + spermidine + H(+). The protein operates within amine and polyamine biosynthesis; spermidine biosynthesis; spermidine from putrescine: step 1/1. In terms of biological role, catalyzes the irreversible transfer of a propylamine group from the amino donor S-adenosylmethioninamine (decarboxy-AdoMet) to putrescine (1,4-diaminobutane) to yield spermidine. The polypeptide is Polyamine aminopropyltransferase (Clostridium perfringens (strain 13 / Type A)).